The sequence spans 454 residues: Kynurenine--oxoglutarate transaminase 3 (454 aa).

Phenylalanine 2 carries the post-translational modification N-acetylserine. Glycine 71 serves as a coordination point for substrate. N6-acetyllysine; alternate is present on lysine 116. Lysine 116 is subject to N6-succinyllysine; alternate. Asparagine 218 contacts substrate. Lysine 280 carries the N6-(pyridoxal phosphate)lysine modification. Arginine 429 is a binding site for substrate.

It belongs to the class-I pyridoxal-phosphate-dependent aminotransferase family. In terms of assembly, homodimer. Requires pyridoxal 5'-phosphate as cofactor.

The catalysed reaction is L-kynurenine + 2-oxoglutarate = kynurenate + L-glutamate + H2O. It catalyses the reaction L-kynurenine + glyoxylate = kynurenate + glycine + H2O. The enzyme catalyses 3-hydroxy-L-kynurenine + glyoxylate = xanthurenate + glycine + H2O. It carries out the reaction an S-substituted L-cysteine + H2O = a thiol + pyruvate + NH4(+). The protein operates within amino-acid degradation; L-kynurenine degradation; kynurenate from L-kynurenine: step 1/2. Catalyzes the irreversible transamination of the L-tryptophan metabolite L-kynurenine to form kynurenic acid (KA), an intermediate in the tryptophan catabolic pathway which is also a broad spectrum antagonist of the three ionotropic excitatory amino acid receptors among others. May catalyze the beta-elimination of S-conjugates and Se-conjugates of L-(seleno)cysteine, resulting in the cleavage of the C-S or C-Se bond. Has transaminase activity towards L-kynurenine, tryptophan, phenylalanine, serine, cysteine, methionine, histidine, glutamine and asparagine with glyoxylate as an amino group acceptor (in vitro). Has lower activity with 2-oxoglutarate as amino group acceptor (in vitro). The chain is Kynurenine--oxoglutarate transaminase 3 from Homo sapiens (Human).